Consider the following 358-residue polypeptide: Glycerophosphodiester phosphodiesterase, periplasmic (358 aa).

The signal sequence occupies residues 1 to 25; that stretch reads MKLTLKNLSMAIMMSTIVMGSSAMA. The GP-PDE domain maps to 31–355; it reads KIVIAHRGAS…DFPDKAVKFL (325 aa). Residue His36 is the Proton acceptor of the active site. The Ca(2+) site is built by Glu63 and Asp65. His78 serves as the catalytic Proton donor. Glu171 is a binding site for Ca(2+).

It belongs to the glycerophosphoryl diester phosphodiesterase family. Homodimer. It depends on Ca(2+) as a cofactor.

It is found in the periplasm. It catalyses the reaction a sn-glycero-3-phosphodiester + H2O = an alcohol + sn-glycerol 3-phosphate + H(+). Glycerophosphodiester phosphodiesterase hydrolyzes glycerophosphodiesters into glycerol-3-phosphate (G3P) and the corresponding alcohol. In Escherichia coli (strain K12), this protein is Glycerophosphodiester phosphodiesterase, periplasmic (glpQ).